Reading from the N-terminus, the 343-residue chain is F17c-G fimbrial adhesin (343 aa).

A signal peptide spans 1 to 22 (MTNFYKVFLAVFILVCCNISHA). The receptor-binding lectin domain stretch occupies residues 23–199 (AVSFIGSTEN…LNPFTLNDTV (177 aa)). A carbohydrate is bound by residues 65-66 (AN), 110-111 (DT), and 138-141 (STQG). Cysteine 75 and cysteine 132 are oxidised to a cystine. The tract at residues 200 to 343 (TSCRLLTPSA…GISTFTFSYQ (144 aa)) is fimbrillin-binding domain. Residues 287–307 (LKFGPDSPVKGNENQWQLSTG) are disordered. A compositionally biased stretch (polar residues) spans 298 to 307 (NENQWQLSTG).

It belongs to the fimbrial protein family.

The protein localises to the fimbrium. In terms of biological role, essential fimbrial adhesion factor that mediates binding to N-acetylglucosamine-containing receptors in the host intestinal microvilli, leading to colonization of the intestinal tissue, and diarrhea or septicemia. Also confers adhesiveness to laminin and basement membranes. This is F17c-G fimbrial adhesin (f17cG) from Escherichia coli.